Reading from the N-terminus, the 276-residue chain is Rhomboid protease GlpG (276 aa).

Helical transmembrane passes span 94–114, 142–162, 169–189, 192–212, 229–249, and 250–270; these read GPVT…MQIL, ALMH…WYLG, LGSG…GYVQ, FSGP…GYVW, LIIF…GMSM, and ANGA…VDSL. Ser-201 functions as the Nucleophile in the catalytic mechanism. The active site involves His-254.

Belongs to the peptidase S54 family.

It localises to the cell inner membrane. It catalyses the reaction Cleaves type-1 transmembrane domains using a catalytic dyad composed of serine and histidine that are contributed by different transmembrane domains.. Rhomboid-type serine protease that catalyzes intramembrane proteolysis. This is Rhomboid protease GlpG from Escherichia coli O7:K1 (strain IAI39 / ExPEC).